Here is a 128-residue protein sequence, read N- to C-terminus: Nanos homolog 1 (128 aa).

The tract at residues 7 to 23 (FDSWSDYLGLSSLISRG) is essential for its translational repressor activity. Residues 25–52 (QPQREGERPRWDVLSPASAEPLPSNESV) form a disordered region. The Nanos-type zinc finger occupies 56–110 (GCGFCRSNREALSLYTSHRLRALDGRVLCPVLRGYTCPLCGANGDWAHTMRYCPL). 8 residues coordinate Zn(2+): Cys57, Cys60, His73, Cys84, Cys92, Cys95, His103, and Cys108. 2 short sequence motifs (C2HC) span residues 57 to 84 (CGFC…RVLC) and 92 to 108 (CPLC…MRYC).

The protein belongs to the nanos family. In terms of assembly, interacts with ccnb1. Ovary and testis.

The protein localises to the cytoplasm. Its subcellular location is the perinuclear region. Functionally, acts as a translational repressor. Can mediate repression affecting different steps in the translation process: cap-driven, IRES-driven, polyadenylated RNAs or nonpolyadenylated RNAs. Essential for the development of primordial germ cells (PGCs) by ensuring their proper migration and survival. This Xenopus laevis (African clawed frog) protein is Nanos homolog 1 (nanos1).